A 148-amino-acid polypeptide reads, in one-letter code: Protein GLUTAMINE DUMPER 3 (148 aa).

Positions 1 to 24 (MEGRQYYPPRENVEGNRTTMGGGP) are disordered. Residues 1–34 (MEGRQYYPPRENVEGNRTTMGGGPHSPWHSPVPY) lie on the Extracellular side of the membrane. Residues 35 to 55 (LFGGLAAMLGLIAFALLILAC) traverse the membrane as a helical segment. Topologically, residues 56-148 (SYWRLSGYLD…RSSESNGETH (93 aa)) are cytoplasmic. The VIMAG motif lies at 99 to 103 (VIMAG). Over residues 120–132 (CDDDDDEDDDVEG) the composition is skewed to acidic residues. A disordered region spans residues 120–148 (CDDDDDEDDDVEGSDQVVPRSSESNGETH). The segment covering 138–148 (PRSSESNGETH) has biased composition (polar residues).

It belongs to the GLUTAMINE DUMPER 1 (TC 9.B.60) family. Expressed in the vascular tissues. Also detected in anthers.

It localises to the membrane. Functionally, probable subunit of an amino acid transporter involved in the regulation of the amino acid metabolism. Stimulates amino acid export by activating nonselective amino acid facilitators. Acts upstream genes involved in the salicylic acid (SA) pathway and in the geminivirus-host interaction. This Arabidopsis thaliana (Mouse-ear cress) protein is Protein GLUTAMINE DUMPER 3 (GDU3).